A 341-amino-acid chain; its full sequence is Small ribosomal subunit biogenesis GTPase RsgA (341 aa).

The CP-type G domain occupies 112–268 (RQQLIAANLD…LIDTPGMREL (157 aa)). Residues 157-160 (TKVD) and 210-218 (GSSGAGKST) contribute to the GTP site. Positions 290, 295, 297, and 303 each coordinate Zn(2+).

Belongs to the TRAFAC class YlqF/YawG GTPase family. RsgA subfamily. In terms of assembly, monomer. Associates with 30S ribosomal subunit, binds 16S rRNA. It depends on Zn(2+) as a cofactor.

The protein localises to the cytoplasm. Its function is as follows. One of several proteins that assist in the late maturation steps of the functional core of the 30S ribosomal subunit. Helps release RbfA from mature subunits. May play a role in the assembly of ribosomal proteins into the subunit. Circularly permuted GTPase that catalyzes slow GTP hydrolysis, GTPase activity is stimulated by the 30S ribosomal subunit. In Xylella fastidiosa (strain Temecula1 / ATCC 700964), this protein is Small ribosomal subunit biogenesis GTPase RsgA.